The primary structure comprises 299 residues: tRNA dimethylallyltransferase (299 aa).

Residue 13–20 coordinates ATP; it reads GPTASGKT. Residue 15-20 participates in substrate binding; that stretch reads TASGKT. Positions 38-41 are interaction with substrate tRNA; the sequence is DSRQ.

It belongs to the IPP transferase family. Monomer. The cofactor is Mg(2+).

The enzyme catalyses adenosine(37) in tRNA + dimethylallyl diphosphate = N(6)-dimethylallyladenosine(37) in tRNA + diphosphate. Functionally, catalyzes the transfer of a dimethylallyl group onto the adenine at position 37 in tRNAs that read codons beginning with uridine, leading to the formation of N6-(dimethylallyl)adenosine (i(6)A). This is tRNA dimethylallyltransferase from Prochlorococcus marinus (strain SARG / CCMP1375 / SS120).